We begin with the raw amino-acid sequence, 407 residues long: Substance-P receptor (407 aa).

At 1–31 the chain is on the extracellular side; sequence MDNVLQVDSDLFPNISTNTSEPNQFVQPAWQ. 2 N-linked (GlcNAc...) asparagine glycosylation sites follow: asparagine 14 and asparagine 18. A helical membrane pass occupies residues 32–54; sequence IVLWAAAYTVIVVTSVVGNVVVM. Residues 55-64 lie on the Cytoplasmic side of the membrane; the sequence is WIILAHKRMR. A helical transmembrane segment spans residues 65–86; that stretch reads TVTNYFLVNLAFAEASMAAFNT. Residues 87-106 lie on the Extracellular side of the membrane; it reads VVNFTYAVHNEWYYGLFYCK. Cysteine 105 and cysteine 180 are oxidised to a cystine. The helical transmembrane segment at 107 to 128 threads the bilayer; sequence FHNFFPIAAVFASIYSMTAVAF. The Cytoplasmic portion of the chain corresponds to 129–148; the sequence is DRYMAIIHPLQPRLSATATK. Residues 149–169 traverse the membrane as a helical segment; that stretch reads VVICVIWVLALLLAFPQGYYS. At 170 to 194 the chain is on the extracellular side; that stretch reads TTETMPNRVVCMIEWPEHPNKIYEK. The helical transmembrane segment at 195–219 threads the bilayer; the sequence is VYHICVTVLIYFLPLLVIGYAYTVV. At 220–248 the chain is on the cytoplasmic side; the sequence is GITLWASEIPGDSSDRYHEQVSAKRKVVK. Residues 249-270 traverse the membrane as a helical segment; that stretch reads MMIVVVCTFAICWLPFHIFFLL. Residues 271–283 are Extracellular-facing; it reads PYINPDLYLEKFI. The chain crosses the membrane as a helical span at residues 284 to 308; it reads QQVYLAIMWLAMSSTMYNPIIYCCL. Residues 309 to 407 lie on the Cytoplasmic side of the membrane; the sequence is NDRFRLGFKH…SFSFYSNMLS (99 aa). Cysteine 322 carries S-palmitoyl cysteine lipidation. The disordered stretch occupies residues 365–394; the sequence is HEEELEDGPKTTPSSLDLTSNGSSRSDSKT. Polar residues predominate over residues 375 to 394; sequence TTPSSLDLTSNGSSRSDSKT.

The protein belongs to the G-protein coupled receptor 1 family. Interacts with ARRB1.

It is found in the cell membrane. This is a receptor for the tachykinin neuropeptide substance P. It is probably associated with G proteins that activate a phosphatidylinositol-calcium second messenger system. The sequence is that of Substance-P receptor (TACR1) from Canis lupus familiaris (Dog).